Reading from the N-terminus, the 1779-residue chain is Collagen alpha-1(IV) chain (1779 aa).

The first 23 residues, 1–23, serve as a signal peptide directing secretion; the sequence is MLPFWKRLLYAAVIAGALVGADA. N-linked (GlcNAc...) asparagine glycosylation is present at N72. Disordered stretches follow at residues 89–643, 655–1187, 1200–1285, and 1336–1530; these read GNRG…KPAL, DKGY…LPGL, TGAP…IGPR, and GLPG…RGYE. Over residues 144-163 the composition is skewed to low complexity; the sequence is QAGVPGVQGPAGNPGAPGIN. 2 stretches are compositionally biased toward basic and acidic residues: residues 196-217 and 249-259; these read KGEK…KGEP and PRGEHGLKGEK. Positions 360-369 are enriched in low complexity; that stretch reads PGLNGLPGNP. Positions 434–443 are enriched in gly residues; that stretch reads GQKGGAGLPG. Positions 531–545 are enriched in low complexity; the sequence is GRPGTPGAAGAPGQK. A compositionally biased stretch (basic and acidic residues) spans 724-747; the sequence is PGFHGRDGAKGDKGSFGRSGEKGE. Composition is skewed to low complexity over residues 913–931 and 1015–1036; these read VGPI…PGID and PGLM…QGLD. The segment covering 1106–1127 has biased composition (basic and acidic residues); the sequence is EKGDQGRSGIDGRDGINGEKGE. The segment covering 1151–1170 has biased composition (low complexity); the sequence is APGMDGLPGAAGAPGAVGYP. Composition is skewed to basic and acidic residues over residues 1224–1245, 1496–1505, and 1517–1529; these read IRGD…EQGE, ERGEKGERGL, and PKGD…ERGY. Residues 1555–1778 enclose the Collagen IV NC1 domain; sequence GILITRHSQS…SRCQVCMKNS (224 aa). 6 cysteine pairs are disulfide-bonded: C1570–C1659, C1603–C1656, C1615–C1621, C1678–C1774, C1712–C1771, and C1724–C1731.

It belongs to the type IV collagen family. Trimers of two alpha 1(IV) and one alpha 2(IV) chain. Type IV collagen forms a mesh-like network linked through intermolecular interactions between 7S domains and between NC1 domains. Prolines at the third position of the tripeptide repeating unit (G-X-Y) are hydroxylated in some or all of the chains. In terms of processing, type IV collagens contain numerous cysteine residues which are involved in inter- and intramolecular disulfide bonding. 12 of these, located in the NC1 domain, are conserved in all known type IV collagens.

The protein localises to the secreted. It is found in the extracellular space. The protein resides in the extracellular matrix. Its subcellular location is the basement membrane. Its function is as follows. Collagen type IV is specific for basement membranes. The sequence is that of Collagen alpha-1(IV) chain from Drosophila melanogaster (Fruit fly).